The primary structure comprises 495 residues: Glycerol kinase (495 aa).

Thr16 lines the ADP pocket. Positions 16 and 17 each coordinate ATP. Thr16 is a binding site for sn-glycerol 3-phosphate. Arg20 contributes to the ADP binding site. Residues Arg86, Glu87, Tyr138, and Asp246 each coordinate sn-glycerol 3-phosphate. Glycerol is bound by residues Arg86, Glu87, Tyr138, Asp246, and Gln247. The ADP site is built by Thr268 and Gly316. The ATP site is built by Thr268, Gly316, Gln320, and Gly417. ADP is bound by residues Gly417 and Asn421.

Belongs to the FGGY kinase family.

The enzyme catalyses glycerol + ATP = sn-glycerol 3-phosphate + ADP + H(+). It functions in the pathway polyol metabolism; glycerol degradation via glycerol kinase pathway; sn-glycerol 3-phosphate from glycerol: step 1/1. Inhibited by fructose 1,6-bisphosphate (FBP). Key enzyme in the regulation of glycerol uptake and metabolism. Catalyzes the phosphorylation of glycerol to yield sn-glycerol 3-phosphate. This Synechocystis sp. (strain ATCC 27184 / PCC 6803 / Kazusa) protein is Glycerol kinase.